A 46-amino-acid polypeptide reads, in one-letter code: U1-plectoxin-Pt1f (46 aa).

5 disulfides stabilise this stretch: C4–C18, C11–C24, C17–C35, C21–C44, and C26–C33.

This sequence belongs to the neurotoxin 02 (plectoxin) family. 02 (plectoxin) subfamily. Expressed by the venom gland.

The protein localises to the secreted. Functionally, potent toxin that may paralyze and/or kill insect pests such as H.virescens (lepidoptera), S.exigua (beet armyworm) and M.sexta (tobacco hornworm). In Plectreurys tristis (Spider), this protein is U1-plectoxin-Pt1f.